Consider the following 226-residue polypeptide: ATP synthase subunit a (226 aa).

6 helical membrane passes run 18–38, 79–99, 105–125, 134–154, 179–199, and 201–221; these read FITG…SLGA, LAGT…IPGF, SWSF…FEGI, FAHF…IEII, LIML…VLFF, and GILQ…GAVL.

The protein belongs to the ATPase A chain family. F-type ATPases have 2 components, CF(1) - the catalytic core - and CF(0) - the membrane proton channel. CF(1) has five subunits: alpha(3), beta(3), gamma(1), delta(1), epsilon(1). CF(0) has three main subunits: a(1), b(2) and c(9-12). The alpha and beta chains form an alternating ring which encloses part of the gamma chain. CF(1) is attached to CF(0) by a central stalk formed by the gamma and epsilon chains, while a peripheral stalk is formed by the delta and b chains.

The protein localises to the cell inner membrane. In terms of biological role, key component of the proton channel; it plays a direct role in the translocation of protons across the membrane. This Helicobacter pylori (strain J99 / ATCC 700824) (Campylobacter pylori J99) protein is ATP synthase subunit a.